Consider the following 576-residue polypeptide: Proteinaceous RNase P 3 (576 aa).

Positions 65-75 (NRRSRHDDESP) are enriched in basic and acidic residues. A disordered region spans residues 65–88 (NRRSRHDDESPKNPNKKKKGNRNP). PPR repeat units lie at residues 88–123 (PEKS…DIRL), 129–166 (QSLL…GISP), 167–201 (NESS…GGVS), and 204–238 (RLRT…GIVL). The PRORP domain occupies 335-570 (SSAGKCLSCD…KEESLRSWMC (236 aa)). Zn(2+)-binding residues include C340 and C343. Residues D402, D480, D481, and D499 each contribute to the Mn(2+) site. Positions 553 and 570 each coordinate Zn(2+).

The protein belongs to the PPR family. P subfamily. It depends on Mg(2+) as a cofactor. The cofactor is Mn(2+).

It localises to the nucleus. The enzyme catalyses Endonucleolytic cleavage of RNA, removing 5'-extranucleotides from tRNA precursor.. Endonuclease RNase P responsible for the 5' maturation of tRNA precursors. Also involved in the maturation of mRNA and small nucleolar RNA (snoRNA). The polypeptide is Proteinaceous RNase P 3 (PRORP3) (Arabidopsis thaliana (Mouse-ear cress)).